The sequence spans 104 residues: Cell division topological specificity factor (104 aa).

It belongs to the MinE family.

Prevents the cell division inhibition by proteins MinC and MinD at internal division sites while permitting inhibition at polar sites. This ensures cell division at the proper site by restricting the formation of a division septum at the midpoint of the long axis of the cell. This is Cell division topological specificity factor from Sorangium cellulosum (strain So ce56) (Polyangium cellulosum (strain So ce56)).